We begin with the raw amino-acid sequence, 397 residues long: Lysophospholipid transporter LplT (397 aa).

Residues Met1–Lys17 lie on the Periplasmic side of the membrane. A helical transmembrane segment spans residues Ala18–Leu38. The Cytoplasmic portion of the chain corresponds to Ala39–Pro52. The helical transmembrane segment at Ile53–Ala73 threads the bilayer. Residues Asp74–Leu90 are Periplasmic-facing. A helical membrane pass occupies residues Leu91–Val111. The Cytoplasmic portion of the chain corresponds to Gly112–Thr144. A helical transmembrane segment spans residues Ile145–Val165. Residue Ala166 is a topological domain, periplasmic. The helical transmembrane segment at Leu167–Leu187 threads the bilayer. Residues Ala188–Ser226 are Cytoplasmic-facing. The chain crosses the membrane as a helical span at residues Leu227–Leu247. Residues Gly248–Thr256 are Periplasmic-facing. A helical membrane pass occupies residues Tyr257 to Val277. Topologically, residues Thr278–Glu280 are cytoplasmic. The helical transmembrane segment at Thr281–Leu301 threads the bilayer. Topologically, residues Gln302–Glu304 are periplasmic. Residues Leu305 to Pro325 traverse the membrane as a helical segment. Residues Leu326–Ala343 lie on the Cytoplasmic side of the membrane. A helical membrane pass occupies residues Ile344 to Leu364. At Ala365 to Val366 the chain is on the periplasmic side. Residues Met367–Ile387 form a helical membrane-spanning segment. The Cytoplasmic segment spans residues Thr388–His397.

Belongs to the major facilitator superfamily. LplT (TC 2.A.1.42) family.

It is found in the cell inner membrane. Catalyzes the facilitated diffusion of 2-acyl-glycero-3-phosphoethanolamine (2-acyl-GPE) into the cell. This Escherichia coli O81 (strain ED1a) protein is Lysophospholipid transporter LplT.